A 218-amino-acid chain; its full sequence is Small ribosomal subunit protein uS3 (218 aa).

In terms of domain architecture, KH type-2 spans 38 to 106; the sequence is IREYISKRLQ…RVHINIVEIK (69 aa).

This sequence belongs to the universal ribosomal protein uS3 family. In terms of assembly, part of the 30S ribosomal subunit. Forms a tight complex with proteins S10 and S14.

Its function is as follows. Binds the lower part of the 30S subunit head. Binds mRNA in the 70S ribosome, positioning it for translation. The protein is Small ribosomal subunit protein uS3 of Geobacillus kaustophilus (strain HTA426).